A 547-amino-acid polypeptide reads, in one-letter code: MAAKEIFFHQSAREAILRGVRTLSDAVAVTLGPKGRNVVIEKSFGSPTITKDGVTVAKEIDLENKFENMGAQMVKEVASKTSDKAGDGTTTATVLARAIYEEGLKLVAAGHSPMDLKRGIDKAVEVVVGELKSLSKPTADKKAITQVGTISANGDETIGAIIADAMEKVGKEGVITVEEAKGLETTLDVVEGMQFDRGYVSPYFVTNRERMEAVLEDPYILISEKKVSSMQDMIPLLEQVARSGKPLIIIADDIEGEALATLVVNKIRGVLNVCAVKAPGFGDRRKEMLQDIAVLTGGTVVSEDLGHKFETLTLTDLGRAKRVTVDKDNTTVVDGVGTKAAIEGRIKLIRTQIDSVTSDYDREKLQERLAKLVGGVAVINVGAATETEMKEKKARVEDALHATRAAVEEGIVPGGGVAYLRALPALEKLKPGGEQDFGVAIIRRALQEPLRKIASNAGVEGAVVINKVREGTGAFGYNARTEVYEDLEKAGVIDPTKVERTALQNAASVASLLLTTEAMVAERPKGKAKGGGAGAGMPDYGGDDMDY.

Residues threonine 30–proline 33, lysine 51, aspartate 87–threonine 91, glycine 415, and aspartate 494 each bind ATP. Positions proline 524–tyrosine 547 are disordered.

It belongs to the chaperonin (HSP60) family. As to quaternary structure, forms a cylinder of 14 subunits composed of two heptameric rings stacked back-to-back. Interacts with the co-chaperonin GroES.

It is found in the cytoplasm. The enzyme catalyses ATP + H2O + a folded polypeptide = ADP + phosphate + an unfolded polypeptide.. Functionally, together with its co-chaperonin GroES, plays an essential role in assisting protein folding. The GroEL-GroES system forms a nano-cage that allows encapsulation of the non-native substrate proteins and provides a physical environment optimized to promote and accelerate protein folding. The protein is Chaperonin GroEL 1 of Myxococcus xanthus (strain DK1622).